A 1697-amino-acid chain; its full sequence is UDP-sugar-dependent glycosyltransferase 52 (1697 aa).

Disordered regions lie at residues 20-40 (HSDSLSSVGSSSNRSNSNYEN) and 142-166 (STDLSNIKTTTTTTTTTTPPPLMIP). Residues 234-332 (DYVLENYLYK…WYHEINRMQK (99 aa)) enclose the PH domain. Disordered stretches follow at residues 573-645 (FRSK…TTHE) and 707-756 (PLDK…KQSQ). Low complexity-rich tracts occupy residues 584–628 (QNSQ…SSSA) and 711–722 (QQQQQQQQQQQQ). GRAM domains follow at residues 658–793 (STFH…TKER) and 881–948 (IKIK…KKYS). A compositionally biased stretch (acidic residues) spans 739 to 749 (TDSDTDSESDF). Disordered regions lie at residues 1011–1047 (SPSIASPSITPPSSTPPSSTTPSSTTPTITSPTIHST), 1062–1085 (DGENNSNNNNNNNNTNNTNKSNSF), 1110–1130 (SAQQQQQQQPKTTTTTTSTTT), and 1466–1488 (EHNNNNNNNNNNNNGENSDSNKS). Composition is skewed to low complexity over residues 1026–1047 (PPSSTTPSSTTPTITSPTIHST), 1065–1084 (NNSNNNNNNNNTNNTNKSNS), 1112–1130 (QQQQQQQPKTTTTTTSTTT), and 1469–1479 (NNNNNNNNNNN). An FYVE-type zinc finger spans residues 1622–1685 (SSAPNSCMGC…VCDKCFNDLQ (64 aa)). Zn(2+) contacts are provided by cysteine 1628, cysteine 1631, cysteine 1647, cysteine 1650, cysteine 1655, cysteine 1658, cysteine 1677, and cysteine 1680.

It belongs to the glycosyltransferase 28 family.

The enzyme catalyses a sterol + UDP-alpha-D-glucose = a sterol 3-beta-D-glucoside + UDP + H(+). Functionally, involved in the biosynthesis of sterol glucoside. Can use different sterols such as cholesterol, sitosterol, and ergosterol as sugar acceptors. The polypeptide is UDP-sugar-dependent glycosyltransferase 52 (ugt52) (Dictyostelium discoideum (Social amoeba)).